A 136-amino-acid polypeptide reads, in one-letter code: Large ribosomal subunit protein uL16 (136 aa).

It belongs to the universal ribosomal protein uL16 family. Part of the 50S ribosomal subunit.

In terms of biological role, binds 23S rRNA and is also seen to make contacts with the A and possibly P site tRNAs. The chain is Large ribosomal subunit protein uL16 from Yersinia enterocolitica serotype O:8 / biotype 1B (strain NCTC 13174 / 8081).